A 271-amino-acid chain; its full sequence is Phosphate import ATP-binding protein PstB 2 (271 aa).

Residues 25-266 (MATEDLHVYY…PQEKQTEDYI (242 aa)) form the ABC transporter domain. 57–64 (GPSGCGKS) provides a ligand contact to ATP.

Belongs to the ABC transporter superfamily. Phosphate importer (TC 3.A.1.7) family. As to quaternary structure, the complex is composed of two ATP-binding proteins (PstB), two transmembrane proteins (PstC and PstA) and a solute-binding protein (PstS).

The protein localises to the cell membrane. It carries out the reaction phosphate(out) + ATP + H2O = ADP + 2 phosphate(in) + H(+). In terms of biological role, part of the ABC transporter complex PstSACB involved in phosphate import. Responsible for energy coupling to the transport system. The sequence is that of Phosphate import ATP-binding protein PstB 2 from Listeria monocytogenes serovar 1/2a (strain ATCC BAA-679 / EGD-e).